The chain runs to 379 residues: Succinyl-diaminopimelate desuccinylase (379 aa).

Position 68 (H68) interacts with Zn(2+). Residue D70 is part of the active site. D101 contributes to the Zn(2+) binding site. The active-site Proton acceptor is the E135. The Zn(2+) site is built by E136, E164, and H350.

Belongs to the peptidase M20A family. DapE subfamily. Homodimer. Requires Zn(2+) as cofactor. The cofactor is Co(2+).

It catalyses the reaction N-succinyl-(2S,6S)-2,6-diaminopimelate + H2O = (2S,6S)-2,6-diaminopimelate + succinate. Its pathway is amino-acid biosynthesis; L-lysine biosynthesis via DAP pathway; LL-2,6-diaminopimelate from (S)-tetrahydrodipicolinate (succinylase route): step 3/3. Functionally, catalyzes the hydrolysis of N-succinyl-L,L-diaminopimelic acid (SDAP), forming succinate and LL-2,6-diaminopimelate (DAP), an intermediate involved in the bacterial biosynthesis of lysine and meso-diaminopimelic acid, an essential component of bacterial cell walls. This is Succinyl-diaminopimelate desuccinylase from Bordetella pertussis (strain Tohama I / ATCC BAA-589 / NCTC 13251).